Here is a 317-residue protein sequence, read N- to C-terminus: Xylose/arabinose import permease protein XacH (317 aa).

The next 6 helical transmembrane spans lie at 40 to 60 (GIPFVLMSIAVYGGTGYNFAI), 98 to 118 (LVLLVGFTTICLVLGLFLAIL), 132 to 152 (VYLLPMSLSFVVTAQLWLWMF), 179 to 199 (IALGAVILALIWQFSGYTMVV), 241 to 261 (AAVVLMVFALKAFTFLYALVG), and 290 to 310 (AAIATMLLIMALGVIGPYLYY). The region spanning 94 to 309 (AQNNLVLLVG…ALGVIGPYLY (216 aa)) is the ABC transmembrane type-1 domain.

The protein belongs to the binding-protein-dependent transport system permease family. As to quaternary structure, the complex is composed of two ATP-binding proteins (XacJ and XacK), two transmembrane proteins (XacH and XacI) and a solute-binding protein (XacG).

It localises to the cell membrane. Functionally, part of the ABC transporter complex XacGHIJK involved in the uptake of xylose and arabinose. Responsible for the translocation of the substrate across the membrane. This Haloferax volcanii (strain ATCC 29605 / DSM 3757 / JCM 8879 / NBRC 14742 / NCIMB 2012 / VKM B-1768 / DS2) (Halobacterium volcanii) protein is Xylose/arabinose import permease protein XacH.